We begin with the raw amino-acid sequence, 233 residues long: UPF0502 protein Sden_2282 (233 aa).

Residues 178 to 198 (TQHQRPPQTPHLSSRTNVDNS) are compositionally biased toward polar residues. The segment at 178-204 (TQHQRPPQTPHLSSRTNVDNSYESDER) is disordered.

It belongs to the UPF0502 family.

In Shewanella denitrificans (strain OS217 / ATCC BAA-1090 / DSM 15013), this protein is UPF0502 protein Sden_2282.